Reading from the N-terminus, the 696-residue chain is Catalase (696 aa).

Active-site residues include H64 and N137. Residues 187-211 (SLAQGSQISSERGSPKAYSNTEPNK) form a disordered region. Positions 189 to 208 (AQGSQISSERGSPKAYSNTE) are enriched in polar residues. Y353 provides a ligand contact to heme.

Belongs to the catalase family. The cofactor is heme.

The catalysed reaction is 2 H2O2 = O2 + 2 H2O. Occurs in almost all aerobically respiring organisms and serves to protect cells from the toxic effects of hydrogen peroxide. The sequence is that of Catalase from Penicillium janthinellum (Penicillium vitale).